We begin with the raw amino-acid sequence, 580 residues long: F-box only protein 24 (580 aa).

Residues 36–82 (PISIQLFPPELVEHIISFLPVRDLVALGQTCRYFHEVCDAEGVWRRI) form the F-box domain. An RCC1 repeat occupies 376–425 (GRIFMQGNNRYGQLGTGDKMDRGEPTQVRYLQRPITLWCGLNHSLVLSQS).

Directly interacts with SKP1 and CUL1.

Substrate-recognition component of the SCF (SKP1-CUL1-F-box protein)-type E3 ubiquitin ligase complex. In Macaca fascicularis (Crab-eating macaque), this protein is F-box only protein 24 (FBXO24).